The primary structure comprises 366 residues: 3-dehydroquinate synthase (366 aa).

Residues Asp-69 to Lys-74, Gly-103 to Asp-107, Thr-127 to Thr-128, Lys-140, and Lys-149 each bind NAD(+). Zn(2+)-binding residues include Glu-182, His-245, and His-262.

The protein belongs to the sugar phosphate cyclases superfamily. Dehydroquinate synthase family. It depends on Co(2+) as a cofactor. The cofactor is Zn(2+). Requires NAD(+) as cofactor.

Its subcellular location is the cytoplasm. It carries out the reaction 7-phospho-2-dehydro-3-deoxy-D-arabino-heptonate = 3-dehydroquinate + phosphate. Its pathway is metabolic intermediate biosynthesis; chorismate biosynthesis; chorismate from D-erythrose 4-phosphate and phosphoenolpyruvate: step 2/7. Catalyzes the conversion of 3-deoxy-D-arabino-heptulosonate 7-phosphate (DAHP) to dehydroquinate (DHQ). The protein is 3-dehydroquinate synthase of Pseudomonas fluorescens (strain ATCC BAA-477 / NRRL B-23932 / Pf-5).